The primary structure comprises 264 residues: MPFITKISTQKKNTERFNIFLDDKYAFSVDADVLVKFELKKGKELDDLDIIEIQYGDEVKKGFNRALDFLSYRMRSTKEVEDHLKKKETSPPVIAEVIHRLNDYKYLNDQEFAAAYVSTHKKTNGKGPDVLFRELRAKGIDDDTIKEALSSFSFEDQTREAVKHVEKLLKKDKKLSTKELKQRAQLQLQRKGFSFDVISAAMDQIEYENDEDTEKEALRLHAEKAFRKYRYDGSYESAMKVKQFLFRKGFSLDLIEQLLQEEEY.

Belongs to the RecX family.

The protein localises to the cytoplasm. Functionally, negatively modulates RecA activity. This chain is Regulatory protein RecX, found in Bacillus subtilis (strain 168).